A 320-amino-acid polypeptide reads, in one-letter code: Sucrose operon repressor (320 aa).

The 55-residue stretch at 1 to 55 (MKNIADIAKIAGVSKSTVSRYLNNGSVSLKTQQKLDEIIRENDYQPNQFAQSLRA) folds into the HTH lacI-type domain. The segment at residues 4–23 (IADIAKIAGVSKSTVSRYLN) is a DNA-binding region (H-T-H motif).

Its function is as follows. Negative regulator of scrB expression. This Staphylococcus xylosus protein is Sucrose operon repressor (scrR).